The following is a 332-amino-acid chain: MSKLPLLPTTVIGSYPRPKWLRESIRLHKAGKISDEDLQEAFSDAVIAVLKDHYNAGVDVPTDGEVRRDEMVEFFAERIKGFKFYGPVRVWGTAYYRKPSVVSKIEYKKPMLVDEFTFAKSVSYTDNLKITITGPYTIAEWSYNEYYKNKKDLVFDLAKAINQEIKNLVEAGAKIIQIDEPALHTRREDVSWGVEAVNEAVKGVNAKLVMHICYGEYSFVAPYLNELKVDQINFAFKIYNYKPLELLKRYGFDKELGAGVIDVHNRRIETSEEVANDIRKILEYFTPEKVWINPDCGLKLLSRKIAYQKLVSMVEGTKVVREELKRKGYSVD.

Residues His211, Cys213, and Cys296 each contribute to the Zn(2+) site.

This sequence belongs to the archaeal MetE family. Requires Zn(2+) as cofactor.

Its pathway is amino-acid biosynthesis; L-methionine biosynthesis via de novo pathway. Its function is as follows. Catalyzes the transfer of a methyl group to L-homocysteine resulting in methionine formation. The physiological methyl donor is unknown. In Saccharolobus islandicus (strain Y.N.15.51 / Yellowstone #2) (Sulfolobus islandicus), this protein is Methionine synthase.